A 327-amino-acid polypeptide reads, in one-letter code: Glycerol-3-phosphate dehydrogenase [NAD(P)+] (327 aa).

S10, F11, R31, and K108 together coordinate NADPH. Sn-glycerol 3-phosphate-binding residues include K108, G136, and S138. Residue A140 coordinates NADPH. K191, D246, S256, R257, and N258 together coordinate sn-glycerol 3-phosphate. K191 serves as the catalytic Proton acceptor. R257 serves as a coordination point for NADPH. 2 residues coordinate NADPH: L281 and E283.

The protein belongs to the NAD-dependent glycerol-3-phosphate dehydrogenase family.

It localises to the cytoplasm. It carries out the reaction sn-glycerol 3-phosphate + NAD(+) = dihydroxyacetone phosphate + NADH + H(+). The enzyme catalyses sn-glycerol 3-phosphate + NADP(+) = dihydroxyacetone phosphate + NADPH + H(+). The protein operates within membrane lipid metabolism; glycerophospholipid metabolism. In terms of biological role, catalyzes the reduction of the glycolytic intermediate dihydroxyacetone phosphate (DHAP) to sn-glycerol 3-phosphate (G3P), the key precursor for phospholipid synthesis. This Ehrlichia ruminantium (strain Welgevonden) protein is Glycerol-3-phosphate dehydrogenase [NAD(P)+].